We begin with the raw amino-acid sequence, 155 residues long: Small ribosomal subunit protein uS7 (155 aa).

Belongs to the universal ribosomal protein uS7 family. In terms of assembly, part of the 30S ribosomal subunit. Contacts proteins S9 and S11.

In terms of biological role, one of the primary rRNA binding proteins, it binds directly to 16S rRNA where it nucleates assembly of the head domain of the 30S subunit. Is located at the subunit interface close to the decoding center, probably blocks exit of the E-site tRNA. The polypeptide is Small ribosomal subunit protein uS7 (Chlorobium phaeovibrioides (strain DSM 265 / 1930) (Prosthecochloris vibrioformis (strain DSM 265))).